The chain runs to 430 residues: Enolase (430 aa).

Glutamine 167 contributes to the (2R)-2-phosphoglycerate binding site. Glutamate 209 functions as the Proton donor in the catalytic mechanism. Residues aspartate 246, glutamate 287, and aspartate 314 each contribute to the Mg(2+) site. (2R)-2-phosphoglycerate contacts are provided by lysine 339, arginine 368, serine 369, and lysine 390. Catalysis depends on lysine 339, which acts as the Proton acceptor.

Belongs to the enolase family. Requires Mg(2+) as cofactor.

It is found in the cytoplasm. The protein localises to the secreted. The protein resides in the cell surface. The catalysed reaction is (2R)-2-phosphoglycerate = phosphoenolpyruvate + H2O. Its pathway is carbohydrate degradation; glycolysis; pyruvate from D-glyceraldehyde 3-phosphate: step 4/5. Functionally, catalyzes the reversible conversion of 2-phosphoglycerate (2-PG) into phosphoenolpyruvate (PEP). It is essential for the degradation of carbohydrates via glycolysis. This Prochlorococcus marinus subsp. pastoris (strain CCMP1986 / NIES-2087 / MED4) protein is Enolase.